The sequence spans 173 residues: Small ribosomal subunit protein uS9 (173 aa).

Positions 20-53 (SYTTESEVPVEGEYTSESVASRFGEPQPAAGLGR) are disordered.

It belongs to the universal ribosomal protein uS9 family.

This Streptomyces avermitilis (strain ATCC 31267 / DSM 46492 / JCM 5070 / NBRC 14893 / NCIMB 12804 / NRRL 8165 / MA-4680) protein is Small ribosomal subunit protein uS9.